The following is a 367-amino-acid chain: Histidinol-phosphate aminotransferase (367 aa).

Lys222 is modified (N6-(pyridoxal phosphate)lysine).

Belongs to the class-II pyridoxal-phosphate-dependent aminotransferase family. Histidinol-phosphate aminotransferase subfamily. Requires pyridoxal 5'-phosphate as cofactor.

The catalysed reaction is L-histidinol phosphate + 2-oxoglutarate = 3-(imidazol-4-yl)-2-oxopropyl phosphate + L-glutamate. Its pathway is amino-acid biosynthesis; L-histidine biosynthesis; L-histidine from 5-phospho-alpha-D-ribose 1-diphosphate: step 7/9. The sequence is that of Histidinol-phosphate aminotransferase from Methanosphaera stadtmanae (strain ATCC 43021 / DSM 3091 / JCM 11832 / MCB-3).